A 266-amino-acid polypeptide reads, in one-letter code: Uridylate kinase (266 aa).

Residue 26–29 (KLGG) participates in ATP binding. Gly-67 is a UMP binding site. 2 residues coordinate ATP: Gly-68 and Arg-72. Residues Asp-87 and 148–155 (LGAPYFST) each bind UMP. ATP contacts are provided by Tyr-181 and Asp-184.

This sequence belongs to the UMP kinase family. Homohexamer.

The protein resides in the cytoplasm. It carries out the reaction UMP + ATP = UDP + ADP. The protein operates within pyrimidine metabolism; CTP biosynthesis via de novo pathway; UDP from UMP (UMPK route): step 1/1. Inhibited by UTP. Functionally, catalyzes the reversible phosphorylation of UMP to UDP. The protein is Uridylate kinase of Acidothermus cellulolyticus (strain ATCC 43068 / DSM 8971 / 11B).